We begin with the raw amino-acid sequence, 92 residues long: UPF0223 protein SSP1692 (92 aa).

It belongs to the UPF0223 family.

The sequence is that of UPF0223 protein SSP1692 from Staphylococcus saprophyticus subsp. saprophyticus (strain ATCC 15305 / DSM 20229 / NCIMB 8711 / NCTC 7292 / S-41).